Here is a 220-residue protein sequence, read N- to C-terminus: MKKEKAVVVFSGGQDSTTCLFWAMEQFAEVEAVTFNYNQRHKLEIDCAAEIAKELGIKHTVLDMSLLNQLAPNALTRTDMEITHEEGELPSTFVDGRNLLFLSFAAVLAKQVGARHIVTGVCETDFSGYPDCRDVFVKSLNVTLNLSMDYPFVIHTPLMWIDKAETWKLSDELGAFEFVREKTLTCYNGIIGDGCGECPACQLRKAGLDTYLQEREGASN.

10–20 (FSGGQDSTTCL) is a binding site for ATP. Zn(2+) contacts are provided by Cys-186, Cys-195, Cys-198, and Cys-201.

This sequence belongs to the QueC family. In terms of assembly, homodimer. Zn(2+) serves as cofactor.

The catalysed reaction is 7-carboxy-7-deazaguanine + NH4(+) + ATP = 7-cyano-7-deazaguanine + ADP + phosphate + H2O + H(+). Its pathway is purine metabolism; 7-cyano-7-deazaguanine biosynthesis. Its function is as follows. Catalyzes the ATP-dependent conversion of 7-carboxy-7-deazaguanine (CDG) to 7-cyano-7-deazaguanine (preQ(0)). The protein is 7-cyano-7-deazaguanine synthase of Bacillus cereus (strain AH187).